A 180-amino-acid polypeptide reads, in one-letter code: Adenine phosphoribosyltransferase (180 aa).

The protein belongs to the purine/pyrimidine phosphoribosyltransferase family. Homodimer.

The protein resides in the cytoplasm. It catalyses the reaction AMP + diphosphate = 5-phospho-alpha-D-ribose 1-diphosphate + adenine. Its pathway is purine metabolism; AMP biosynthesis via salvage pathway; AMP from adenine: step 1/1. Functionally, catalyzes a salvage reaction resulting in the formation of AMP, that is energically less costly than de novo synthesis. This Sinorhizobium medicae (strain WSM419) (Ensifer medicae) protein is Adenine phosphoribosyltransferase.